A 460-amino-acid polypeptide reads, in one-letter code: GTPase Der (460 aa).

2 EngA-type G domains span residues Q2–F164 and I196–T368. GTP is bound by residues G8–S15, D55–L59, N116–D119, G202–S209, D249–I253, and N313–D316. Positions Q369 to G453 constitute a KH-like domain.

This sequence belongs to the TRAFAC class TrmE-Era-EngA-EngB-Septin-like GTPase superfamily. EngA (Der) GTPase family. In terms of assembly, associates with the 50S ribosomal subunit.

Functionally, GTPase that plays an essential role in the late steps of ribosome biogenesis. This is GTPase Der from Campylobacter jejuni subsp. jejuni serotype O:2 (strain ATCC 700819 / NCTC 11168).